The primary structure comprises 369 residues: Endo-1,4-beta-xylanase A (369 aa).

The signal sequence occupies residues 1 to 20; that stretch reads MRKLTQFCLGLMLLPIAAVA. The 347-residue stretch at 21–367 folds into the GH10 domain; that stretch reads QNQPTMKDVL…KPVVKEIIKL (347 aa). Glu156 functions as the Proton donor in the catalytic mechanism. Catalysis depends on Glu261, which acts as the Nucleophile.

The protein belongs to the glycosyl hydrolase 10 (cellulase F) family.

It catalyses the reaction Endohydrolysis of (1-&gt;4)-beta-D-xylosidic linkages in xylans.. It participates in glycan degradation; xylan degradation. This is Endo-1,4-beta-xylanase A (xynA) from Xylanibacter ruminicola (Prevotella ruminicola).